We begin with the raw amino-acid sequence, 341 residues long: MDHAGDAMRTDLMTITRYVLNEQSKRPESRGDFTILLSHIVLGCKFVCSAVNKAGLAKLIGLAGETNIQGEEQKKLDVLSNEVFVKALTSSGRTCILVSEEDEEATFIEPSLRGKYCVVFDPLDGSSNIDCGVSIGTIFGIYMVKDFETATLEDVLQPGKNMVAAGYCMYGSSCTLVLSTGSGVNGFTLDPSLGEYILTHPDIKIPNKGKIYSVNEGNAKNWDGPTTKYVEKCKFPTDGSSPKSLRYIGSMVADVHRTLLYGGIFLYPGDKKSPNGKLRVLYEVFPMSFLMEQAGGQAFTGKQRALDLIPTKIHERSPVFLGSYDDVEDIKALYAAQEKTA.

Mg(2+)-binding residues include glutamate 71, glutamate 100, aspartate 121, leucine 123, and aspartate 124. Residues 124–127, asparagine 215, tyrosine 247, tyrosine 267, and lysine 277 contribute to the substrate site; that span reads DGSS. Glutamate 283 is a binding site for Mg(2+).

This sequence belongs to the FBPase class 1 family. Mg(2+) serves as cofactor.

The protein localises to the cytoplasm. The catalysed reaction is beta-D-fructose 1,6-bisphosphate + H2O = beta-D-fructose 6-phosphate + phosphate. In Spinacia oleracea (Spinach), this protein is Fructose-1,6-bisphosphatase, cytosolic.